We begin with the raw amino-acid sequence, 526 residues long: Reelin domain-containing protein 1 (526 aa).

The signal sequence occupies residues 1 to 23; it reads MRMQAALVGWACTTLCLASCSSA. The 156-residue stretch at 24–179 folds into the Reelin domain; it reads FSHGASTVAC…SAHSDDRMEP (156 aa). Residues 24–443 lie on the Extracellular side of the membrane; it reads FSHGASTVAC…PLGIQLRTPQ (420 aa). 3 disordered regions span residues 242–272, 294–336, and 370–398; these read DAETLSQPSSHTATEGSINQQPSGDSNPTLE, FASS…TVTQ, and LQTSGTSGLPAAGDQSEASRASASFLPQS. Polar residues predominate over residues 245–271; sequence TLSQPSSHTATEGSINQQPSGDSNPTL. Positions 385–396 are enriched in polar residues; it reads SEASRASASFLP. A helical membrane pass occupies residues 444–462; that stretch reads LGILLCLSATLGMALAAGL. At 463 to 526 the chain is on the cytoplasmic side; the sequence is RYLHTQYCHQ…PSVGSKKTVL (64 aa).

It localises to the membrane. The sequence is that of Reelin domain-containing protein 1 from Homo sapiens (Human).